Here is a 354-residue protein sequence, read N- to C-terminus: tRNA dimethylallyltransferase (354 aa).

28–35 (GPTATGKS) contacts ATP. 30 to 35 (TATGKS) is a binding site for substrate. Residues 53 to 56 (DSRQ) are interaction with substrate tRNA.

This sequence belongs to the IPP transferase family. Monomer. It depends on Mg(2+) as a cofactor.

It catalyses the reaction adenosine(37) in tRNA + dimethylallyl diphosphate = N(6)-dimethylallyladenosine(37) in tRNA + diphosphate. In terms of biological role, catalyzes the transfer of a dimethylallyl group onto the adenine at position 37 in tRNAs that read codons beginning with uridine, leading to the formation of N6-(dimethylallyl)adenosine (i(6)A). In Synechococcus sp. (strain JA-2-3B'a(2-13)) (Cyanobacteria bacterium Yellowstone B-Prime), this protein is tRNA dimethylallyltransferase.